Reading from the N-terminus, the 229-residue chain is Aminodeoxyfutalosine nucleosidase (229 aa).

The active-site Proton acceptor is Glu13. Substrate contacts are provided by residues Gly79, Ile153, and 173 to 174 (ME). The active-site Proton donor is the Asp197.

The protein belongs to the PNP/UDP phosphorylase family. In terms of assembly, homodimer.

It catalyses the reaction 6-amino-6-deoxyfutalosine + H2O = dehypoxanthine futalosine + adenine. The enzyme catalyses S-adenosyl-L-homocysteine + H2O = S-(5-deoxy-D-ribos-5-yl)-L-homocysteine + adenine. The catalysed reaction is S-methyl-5'-thioadenosine + H2O = 5-(methylsulfanyl)-D-ribose + adenine. It carries out the reaction 5'-deoxyadenosine + H2O = 5-deoxy-D-ribose + adenine. The protein operates within quinol/quinone metabolism; menaquinone biosynthesis. It participates in amino-acid biosynthesis; L-methionine biosynthesis via salvage pathway; S-methyl-5-thio-alpha-D-ribose 1-phosphate from S-methyl-5'-thioadenosine (hydrolase route): step 1/2. In terms of biological role, catalyzes the direct conversion of aminodeoxyfutalosine (AFL) into dehypoxanthine futalosine (DHFL) and adenine via the hydrolysis of the N-glycosidic bond; this reaction seems to represent an essential step in the menaquinone biosynthesis pathway in Campylobacter species. Also catalyzes the hydrolysis of 5'-methylthioadenosine (MTA) to adenine and 5'-methylthioribose. Can also probably use S-adenosylhomocysteine (SAH) as substrate, leading to adenine and S-ribosylhomocysteine. These other activities highlight the tremendous versatility of the enzyme, which also plays key roles in S-adenosylmethionine recycling and in the biosynthesis of the quorum-sensing molecule autoinducer-2. Shows negligible activity with futalosine (FL) as substrate. This is Aminodeoxyfutalosine nucleosidase (pfs) from Campylobacter jejuni subsp. jejuni serotype O:2 (strain ATCC 700819 / NCTC 11168).